Reading from the N-terminus, the 288-residue chain is MARNSDNDMCKEERKRESFFKVLQRVDISSENMRALPYDFVRSFSNNELSRKMKIKARWGSSWEVEICKNPRFYFMEKSGWEKFVSDNALGASEFLTFTHKGNMRFTVNIFMQDGKEMLQPPQSMSFMASSRPPKREQGIPSLATTIAAESNGGGNYKRKLNFEKKKAEESHNSKRTDKVFSVQRESAGASSSSVAEFSMFIKKSYLIYMWFPKSVQSIHMPKQRTIFKIHHPNMKKSWNVVYVVSGTKSSFSAGWKGLAQEYPLAVGDTCKFSFIKQHELILFVSKP.

2 consecutive DNA-binding regions (TF-B3) follow at residues 19-114 and 196-288; these read FFKV…FMQD and AEFS…VSKP.

The protein resides in the nucleus. The sequence is that of B3 domain-containing protein At2g35310 from Arabidopsis thaliana (Mouse-ear cress).